Reading from the N-terminus, the 611-residue chain is Leukotriene A-4 hydrolase (611 aa).

The residue at position 73 (lysine 73) is an N6-acetyllysine. Residues 135-137 (QCQ) and 267-272 (PYGGME) each bind a peptide. Histidine 296 contacts Zn(2+). The Proton acceptor role is filled by glutamate 297. The Zn(2+) site is built by histidine 300 and glutamate 319. Lysine 337 bears the N6-acetyllysine mark. The active-site Proton donor is tyrosine 384. Lysine 414 bears the N6-acetyllysine mark. At serine 416 the chain carries Phosphoserine. A peptide is bound at residue 564–566 (RMK). The residue at position 573 (lysine 573) is an N6-acetyllysine.

Belongs to the peptidase M1 family. In terms of assembly, monomer. Requires Zn(2+) as cofactor. In terms of processing, phosphorylation at Ser-416 inhibits leukotriene-A4 hydrolase activity. Isoform 1 and isoform 2 are expressed in monocytes, lymphocytes, neutrophils, reticulocytes, platelets and fibroblasts.

The protein resides in the cytoplasm. The enzyme catalyses leukotriene A4 + H2O = leukotriene B4. It carries out the reaction (5S,6S)-epoxy-(18R)-hydroxy-(7E,9E,11Z,14Z,16E)-eicosapentaenoate + H2O = resolvin E1. The catalysed reaction is (5S,6S)-epoxy-(18S)-hydroxy-(7E,9E,11Z,14Z,16E)-eicosapentaenoate + H2O = 18S-resolvin E1. It catalyses the reaction Release of the N-terminal residue from a tripeptide.. It functions in the pathway lipid metabolism; leukotriene B4 biosynthesis. Inhibited by bestatin. The epoxide hydrolase activity is restrained by suicide inactivation that involves binding of LTA4 to Tyr-379. 4-(4-benzylphenyl)thiazol-2-amine (ARM1) selectively inhibits the epoxide hydrolase activity. In terms of biological role, bifunctional zinc metalloenzyme that comprises both epoxide hydrolase (EH) and aminopeptidase activities. Acts as an epoxide hydrolase to catalyze the conversion of LTA4 to the pro-inflammatory mediator leukotriene B4 (LTB4). Also has aminopeptidase activity, with high affinity for N-terminal arginines of various synthetic tripeptides. In addition to its pro-inflammatory EH activity, may also counteract inflammation by its aminopeptidase activity, which inactivates by cleavage another neutrophil attractant, the tripeptide Pro-Gly-Pro (PGP), a bioactive fragment of collagen generated by the action of matrix metalloproteinase-9 (MMP9) and prolylendopeptidase (PREPL). Involved also in the biosynthesis of resolvin E1 and 18S-resolvin E1 from eicosapentaenoic acid, two lipid mediators that show potent anti-inflammatory and pro-resolving actions. The protein is Leukotriene A-4 hydrolase (LTA4H) of Homo sapiens (Human).